The chain runs to 346 residues: uncharacterized protein (346 aa).

Residues 16 to 36 (ILGIIICIILIVGFFISFDST) form a helical membrane-spanning segment.

It localises to the membrane. This is an uncharacterized protein from Methanocaldococcus jannaschii (strain ATCC 43067 / DSM 2661 / JAL-1 / JCM 10045 / NBRC 100440) (Methanococcus jannaschii).